The primary structure comprises 832 residues: Cadherin-like protein 26 (832 aa).

An N-terminal signal peptide occupies residues 1–27 (MAMRSGRHPSLLLLLVLLLWLLQVSII). Topologically, residues 28 to 614 (DSVQQETDDL…ELADAEVGLH (587 aa)) are extracellular. Cadherin domains are found at residues 35–165 (DDLT…APQF), 166–275 (PEKE…RPAF), 276–396 (TQEN…PPAF), and 397–500 (HPQS…VPTL). Residues N81, N85, N171, and N177 are each glycosylated (N-linked (GlcNAc...) asparagine). Residue N462 is glycosylated (N-linked (GlcNAc...) asparagine). A helical transmembrane segment spans residues 615-635 (VGALFPVCAAFVALAVALLFL). The Cytoplasmic segment spans residues 636-832 (LRCYFVLEPK…EIYSESGVPS (197 aa)). The segment at 813–832 (SLGSKATPFEEIYSESGVPS) is disordered.

In terms of assembly, homodimer. Component of a cadherin:catenin adhesion complex composed of at least of CDH26, beta-catenin/CTNNB1, alpha-catenin/CTNNA1 and p120 catenin/CTNND1. In terms of processing, N-glycosylated. Expressed by epithelial cells of gastrointestinal tissue.

The protein resides in the cell membrane. Cadherins are calcium-dependent cell adhesion proteins. They preferentially interact with themselves in a homophilic manner in connecting cells; cadherins may thus contribute to the sorting of heterogeneous cell types. Ligand for integrins alpha-E/beta-7, ITGAE:ITGAB7, alpha-4/beta-7, ITGA4:ITGAB7 and alpha-4/beta-1, ITGA4:ITGAB1 through which modulates CD4(+) T cells activation. The polypeptide is Cadherin-like protein 26 (CDH26) (Homo sapiens (Human)).